A 532-amino-acid polypeptide reads, in one-letter code: uncharacterized protein (532 aa).

The next 14 membrane-spanning stretches (helical) occupy residues 25-45, 65-85, 109-129, 134-154, 179-199, 203-223, 248-268, 302-322, 344-364, 371-391, 392-412, 425-445, 459-479, and 494-514; these read ITKILSAVYRVPFQNIVGDVG, SGFPVIISKLMNDYSEKNHHT, AVPIALFMGDSHLAVLIQVAA, LFPFVALLRGGFQGRHEMLPS, KGASLYTAGAAAASGSLAGSL, IILGFFWFKTKRDNQTDRQNE, LLLFIQLVDALNLYALLSGGE, VPYISMAVKNKELKIMKEKIT, KPVNIMLFQNGEGTGALQVFS, SLAVTAAAVLQGAGYTVFPAI, AVGAGVAVKWVLNTLLVPRYG, AAVAGLNLYQLRQKEWLDKLR, SAVLLAYTRLWTFLFPATGRG, and AVFIYCMMRLGIFTDEELNSV.

Belongs to the polysaccharide synthase family.

It is found in the cell membrane. This is an uncharacterized protein from Bacillus subtilis (strain 168).